The following is a 271-amino-acid chain: MVISVVLLLLAACAVPAQGLGSFVHCEPCDEKALSMCPPSPLGCELVKEPGCGCCMTCALAEGQSCGVYTERCAQGLRCLPRQDEEKPLHALLHGRGVCLNEKSYGEQTKIERDSREHEEPTTSEMAEETYSPKVFRPKHTRISELKAEAVKKDRRKKLTQSKFVGGAENTAHPRVIPAPEMRQESDQGPCRRHMEASLQEFKASPRMVPRAVYLPNCDRKGFYKRKQCKPSRGRKRGICWCVDKYGMKLPGMEYVDGDFQCHAFDSSNVE.

The N-terminal stretch at 1–19 (MVISVVLLLLAACAVPAQG) is a signal peptide. An IGFBP N-terminal domain is found at 22 to 102 (SFVHCEPCDE…LHGRGVCLNE (81 aa)). 6 disulfides stabilise this stretch: C26–C52, C29–C54, C37–C55, C44–C58, C66–C79, and C73–C99. A compositionally biased stretch (basic and acidic residues) spans 109–121 (TKIERDSREHEEP). Residues 109–129 (TKIERDSREHEEPTTSEMAEE) form a disordered region. Phosphoserine is present on S115. Residues 188-262 (QGPCRRHMEA…MEYVDGDFQC (75 aa)) enclose the Thyroglobulin type-1 domain. Disulfide bonds link C191–C218, C229–C240, and C242–C262.

Interacts with IGF1; this interaction enhances the growth stimulatory effects of IGF1 on fibroblasts. Interacts with CAV1; this interaction allows trafficking of IGFBP5 from the plasma membrane to the nucleus. Interacts with NCL; this interaction is necessary for IGFBP5 localization to the nucleus. In terms of tissue distribution, mostly in kidney.

The protein resides in the secreted. The protein localises to the cytoplasm. It is found in the nucleus. Multifunctional protein that plays a critical role in regulating the availability of IGFs to their receptors and thereby regulates IGF-mediated cellular processes including proliferation, differentiation, and apoptosis in a cell-type specific manner. Increases the cell proliferation of osteoblasts, intestinal smooth muscle cells and neuroblastoma cells. Enhances adhesion and survival of epithelial cells but decreases adhesion of mesenchymal cells. Once secreted, acts as a major mediator of mTORC1-dependent feedback inhibition of IGF1 signaling. Also plays a role in the induction of extracellular matrix (ECM) production and deposition independently of its nuclear translocation and binding to IGFs. Acts itself as a growth factor that can act independently of IGFs to regulate bone formation. Acts as a ligand for the ROR1 receptor which triggers formation of ROR1/HER2 heterodimer to enhance CREB oncogenic signaling. The sequence is that of Insulin-like growth factor-binding protein 5 (Igfbp5) from Rattus norvegicus (Rat).